Consider the following 92-residue polypeptide: Small ribosomal subunit protein uS19c (92 aa).

This sequence belongs to the universal ribosomal protein uS19 family.

The protein resides in the plastid. The protein localises to the chloroplast. In terms of biological role, protein S19 forms a complex with S13 that binds strongly to the 16S ribosomal RNA. The protein is Small ribosomal subunit protein uS19c of Gracilaria tenuistipitata var. liui (Red alga).